The following is a 200-amino-acid chain: MARTAHIVRQTSESSIDLELNLDGTGKTNIETTVPFYNHMMTALGKHSLIDLNIVASGDTDIDAHHTVEDTAIVFGEALRQALGDKRGIRRFADATVPLDEALAKAVVDVSGRPYCVCSGEPEGFQYAMIGGHFTGSLVRHVMESIAFHAQICLHMHLIAGRDPHHIAEAEFKALARALRFAIEPDPRIQGLIPSTKGAL.

It belongs to the imidazoleglycerol-phosphate dehydratase family.

It localises to the cytoplasm. It carries out the reaction D-erythro-1-(imidazol-4-yl)glycerol 3-phosphate = 3-(imidazol-4-yl)-2-oxopropyl phosphate + H2O. The protein operates within amino-acid biosynthesis; L-histidine biosynthesis; L-histidine from 5-phospho-alpha-D-ribose 1-diphosphate: step 6/9. The protein is Imidazoleglycerol-phosphate dehydratase of Bifidobacterium animalis subsp. lactis (strain AD011).